A 3744-amino-acid chain; its full sequence is MSLTEQIEQFASRFRDDDATLQSRYSTLSELYDIMELLNSPEDYHFFLQAVIPLLLNQLKEVPISYDAHSPEQKLRNSMLDIFNRCLMNQTFQPYAMEVLEFLLSVLPKENEENGILCMKVLTTLFKSFKSILQDKLDSFIRIIIQIYKNTPNLINQTFYEAGKAEQGDLDSPKEPQADELLDEFSKNDEEKDFPSKQSSTEPRFENSTSSNGLRSSMFSFKILSECPITMVTLYSSYKQLTSTSLPEFTPLIMNLLNIQIKQQQEAREQAESRGEHFTSISTEIINRPAYCDFILAQIKATSFLAYVFIRGYAPEFLQDYVNFVPDLIIRLLQDCPSELSSARKELLHATRHILSTNYKKLFLPKLDYLFDERILIGNGFTMHETLRPLAYSTVADFIHNIRSELQLSEIEKTIKIYTGYLLDESLALTVQIMSAKLLLNLVERILKLGKENPQEAPRAKKLLMIIIDSYMNRFKTLNRQYDTIMKYYGRYETHKKEKAEKLKNSIQDNDKESEEFMRKVLEPSDDDHLMPQPKKEDINDSPDVEMTESDKVVKNDVEMFDIKNYAPILLLPTPTNDPIKDAFYLYRTLMSFLKTIIHDLKVFNPPPNEYTVANPKLWASVSRVFSYEEVIVFKDLFHECIIGLKFFKDHNEKLSPETTKKHFDISMPSLPVSATKDARELMDYLAFMFMQMDNATFNEIIEQELPFVYERMLEDSGLLHVAQSFLTSEITSPNFAGILLRFLKGKLKDLGNVDFNTSNVLIRLFKLSFMSVNLFPNINEVVLLPHLNDLILNSLKYSTTAEEPLVYFYLIRTLFRSIGGGRFENLYRSIKPILQVLLQSLNQMILTARLPHERELYVELCITVPVRLSVLAPYLPFLMKPLVFALQQYPDLVSQGLRTLELCIDNLTAEYFDPIIEPVIDDVSKALFNLLQPQPFNHAISHNVVRILGKLGGRNRQFLKPPTDLTEKTELDIDAIADFKINGMPEDVPLSVTPGIQSALNILQSYKSDIHYRKSAYKYLTCVLLLMTKSSAEFPTNYTELLKTAVNSIKLERIGIEKNFDLEPTVNKRDYSNQENLFLRLLESVFYATSIKELKDDAMDLLNNLLDHFCLLQVNTTLLNKRNYNGTFNIDLKNPNFMLDSSLILDAIPFALSYYIPEVREVGVLAYKRIYEKSCLIYGEELALSHSFIPELAKQFIHLCYDETYYNKRGGVLGIKVLIDNVKSSSVFLKKYQYNLANGLLFVLKDTQSEAPSAITDSAEKLLIDLLSITFADVKEEDLGNKVLENTLTDIVCELSNANPKVRNACQKSLHTISNLTGIPIVKLMDHSKQFLLSPIFAKPLRALPFTMQIGNVDAITFCLSLPNTFLTFNEELFRLLQESIVLADAEDESLSTNIQKTTEYSTSEQLVQLRIACIKLLAIALKNEEFATAQQGNIRIRILAVFFKTMLKTSPEIINTTYEALKGSLAENSKLPKELLQNGLKPLLMNLSDHQKLTVPGLDALSKLLELLIAYFKVEIGRKLLDHLTAWCRVEVLDTLFGQDLAEQMPTKIIVSIINIFHLLPPQADMFLNDLLLKVMLLERKLRLQLDSPFRTPLARYLNRFHNPVTEYFKKNMTLRQLVLFMCNIVQRPEAKELAEDFEKELDNFYDFYISNIPKNQVRVVSFFTNMVDLFNTMVITNGDEWLKKKGNMILKLKDMLNLTLKTIKENSFYIDHLQLNQSIAKFQALYLRFTELSERDQNPLLLDFIDFSFSNGIKASYSLKKFIFHNIIASSNKEKQNNFINDATLFVLSDKCLDARIFVLKNVINSTLIYEVATSGSLKSYLVEDKKPKWLELLHNKIWKNSNAILAYDVLDHHDLFRFELLQLSAIFIKADPEIIAEIKKDIIKFCWNFIKLEDTLIKQSAYLVTSYFISKFDFPIKVVTQVFVALLRSSHVEARYLVKQSLDVLTPVLHERMNAAGTPDTWINWVKRVMVENSSSQNNILYQFLISHPDLFFNSRDLFISNIIHHMNKITFMSNSNSDSHTLAIDLASLILYWENKTLEITNVNNTKTDSDGDVVMSDSKSDINPVEADTTAIIVDANNNSPISLHLREACTAFLIRYVCASNHRAIETELGLRAINILSELISDKHWTNVNVKLVYFEKFLIFQDLDSENILYYCMNALDVLYVFFKNKTKEWIMENLPTIQNLLEKCIKSDHHDVQEALQKVLQVIMKAIKAQGVSVIIEEESPGKTFIQMLTSVITQDLQETSSVTAGVTLAWVLFMNFPDNIVPLLTPLMKTFSKLCKDHLSISQPKDAMALEEARITTKLLEKVLYILSLKVSLLGDSRRPFLSTVALLIDHSMDQNFLRKIVNMSRSWIFNTEIFPTVKEKAAILTKMLAFEIRGEPSLSKLFYEIVLKLFDQEHFNNTEITVRMEQPFLVGTRVEDIGIRKRFMTILDNSLERDIKERLYYVIRDQNWEFIADYPWLNQALQLLYGSFNREKELSLKNIYCLSPPSILQEYLPENAEMVTEVNDLELSNFVKGHIASMQGLCRIISSDFIDSLIEIFYQDPKAIHRAWVTLFPQVYKSIPKNEKYGFVRSIITLLSKPYHTRQISSRTNVINMLLDSISKIESLELPPHLVKYLAISYNAWYQSINILESIQSNTSIDNTKIIEANEDALLELYVNLQEEDMFYGLWRRRAKYTETNIGLSYEQIGLWDKAQQLYEVAQVKARSGALPYSQSEYALWEDNWIQCAEKLQHWDVLTELAKHEGFTDLLLECGWRVADWNSDRDALEQSVKSVMDVPTPRRQMFKTFLALQNFAESRKGDQEVRKLCDEGIQLSLIKWVSLPIRYTPAHKWLLHGFQQYMEFLEATQIYANLHTTTVQNLDSKAQEIKRILQAWRDRLPNTWDDVNMWNDLVTWRQHAFQVINNAYLPLIPALQQSNSNSNINTHAYRGYHEIAWVINRFAHVARKHNMPDVCISQLARIYTLPNIEIQEAFLKLREQAKCHYQNMNELTTGLDVISNTNLVYFGTVQKAEFFTLKGMFLSKLRAYEEANQAFATAVQIDLNLAKAWAQWGFFNDRRLSEEPNNISFASNAISCYLQAAGLYKNSKIRELLCRILWLISIDDASGMLTNAFDSFRGEIPVWYWITFIPQLLTSLSHKEANMVRHILIRIAKSYPQALHFQLRTTKEDFAVIQRQTMAVMGDKPDTNDRNGRRQPWEYLQELNNILKTAYPLLALSLESLVAQINDRFKSTTDEDLFRLINVLLIDGTLNYNRLPFPRKNPKLPENTEKNLVKFSTTLLAPYIRPKFNADFIDNKPDYETYIKRLRYWRRRLENKLDRASKKENLEVLCPHLSNFHHQKFEDIEIPGQYLLNKDNNVHFIKIARFLPTVDFVRGTHSSYRRLMIRGHDGSVHSFAVQYPAVRHSRREERMFQLYRLFNKSLSKNVETRRRSIQFNLPIAIPLSPQVRIMNDSVSFTTLHEIHNEFCKKKGFDPDDIQDFMADKLNAAHDDALPAPDMTILKVEIFNSIQTMFVPSNVLKDHFTSLFTQFEDFWLFRKQFASQYSSFVFMSYMMMINNRTPHKIHVDKTSGNVFTLEMLPSRFPYERVKPLLKNHDLSLPPDSPIFHNNEPVPFRLTPNIQSLIGDSALEGIFAVNLFTISRALIEPDNELNTYLALFIRDEIISWFSNLHRPIIENPQLREMVQTNVDLIIRKVAQLGHLNSTPTVTTQFILDCIGSAVSPRNLARTDVNFMPWF.

S2 carries the post-translational modification N-acetylserine. HEAT repeat units lie at residues 2-40, 46-92, 94-131, and 135-172; these read SLTEQIEQFASRFRDDDATLQSRYSTLSELYDIMELLNS, FFLQ…NQTF, PYAMEVLEFLLSVLPKENEENGILCMKVLTTLFKSFKS, and DKLDSFIRIIIQIYKNTPNLINQTFYEAGKAEQGDLDS. The segment at 2–2598 is HEAT; sequence SLTEQIEQFA…KPYHTRQISS (2597 aa). S172 is modified (phosphoserine). Basic and acidic residues predominate over residues 185–195; the sequence is FSKNDEEKDFP. The interval 185–212 is disordered; it reads FSKNDEEKDFPSKQSSTEPRFENSTSSN. Residues 196-212 are compositionally biased toward polar residues; sequence SKQSSTEPRFENSTSSN. HEAT repeat units lie at residues 247–284, 319–357, and 437–477; these read PEFTPLIMNLLNIQIKQQQEAREQAESRGEHFTSISTE, QDYVNFVPDLIIRLLQDCPSELSSARKELLHATRHILST, and KLLL…RFKT. Basic and acidic residues predominate over residues 522–539; the sequence is LEPSDDDHLMPQPKKEDI. Residues 522-546 are disordered; it reads LEPSDDDHLMPQPKKEDINDSPDVE. Position 542 is a phosphoserine (S542). HEAT repeat units follow at residues 588–628, 734–771, 779–821, 829–867, 870–910, 919–958, 1074–1112, 1188–1225, 1283–1320, 1369–1408, 1435–1472, 1476–1512, 1693–1734, 1739–1776, 1918–1955, 2115–2155, 2182–2219, 2230–2267, 2269–2307, and 2536–2573; these read RTLM…VFSY, PNFAGILLRFLKGKLKDLGNVDFNTSNVLIRLFKLSFM, INEV…SIGG, RSIKPILQVLLQSLNQMILTARLPHERELYVELCITVPV, SVLA…NLTA, PVIDDVSKALFNLLQPQPFNHAISHNVVRILGKLGGRNRQ, NQENLFLRLLESVFYATSIKELKDDAMDLLNNLLDHFCL, SFIPELAKQFIHLCYDETYYNKRGGVLGIKVLIDNVKS, KVLENTLTDIVCELSNANPKVRNACQKSLHTISNLTGI, TFNEELFRLLQESIVLADAEDESLSTNIQKTTEYSTSEQL, NIRIRILAVFFKTMLKTSPEIINTTYEALKGSLAENSK, ELLQNGLKPLLMNLSDHQKLTVPGLDALSKLLELLIA, LKLK…RFTE, DQNPLLLDFIDFSFSNGIKASYSLKKFIFHNIIASSNK, FPIKVVTQVFVALLRSSHVEARYLVKQSLDVLTPVLHE, ELGL…LDSE, ENLPTIQNLLEKCIKSDHHDVQEALQKVLQVIMKAIKA, SPGKTFIQMLTSVITQDLQETSSVTAGVTLAWVLFMNF, DNIVPLLTPLMKTFSKLCKDHLSISQPKDAMALEEARIT, and IISSDFIDSLIEIFYQDPKAIHRAWVTLFPQVYKSIPK. The tract at residues 2599–3744 is head; it reads RTNVINMLLD…RTDVNFMPWF (1146 aa). Residues 2622-3177 enclose the FAT domain; sequence LVKYLAISYN…HFQLRTTKED (556 aa). A PI3K/PI4K catalytic domain is found at 3374-3732; it reads FLPTVDFVRG…CIGSAVSPRN (359 aa). The segment at 3380-3386 is G-loop; it reads FVRGTHS. Positions 3563-3571 are catalytic loop; that stretch reads MINNRTPHK. The segment at 3600–3625 is activation loop; the sequence is LKNHDLSLPPDSPIFHNNEPVPFRLT. In terms of domain architecture, FATC spans 3712–3744; the sequence is TPTVTTQFILDCIGSAVSPRNLARTDVNFMPWF.

Belongs to the PI3/PI4-kinase family. TRA1 subfamily. Component of the 1.8 MDa SAGA (Spt-Ada-Gcn5 acetyltransferase) complex, which is composed of 19 subunits TRA1, SPT7, TAF5, NGG1/ADA3, SGF73, SPT20/ADA5, SPT8, TAF12, TAF6, HFI1/ADA1, UBP8, GCN5, ADA2, SPT3, SGF29, TAF10, TAF9, SGF11 and SUS1. The SAGA complex is composed of 4 modules, namely the HAT (histone acetyltransferase) module (GCN5, ADA2, NGG1/ADA3 and SGF29), the DUB (deubiquitinating) module (UBP8, SGF11, SGF73 and SUS1), the core or TAF (TBP-associated factor) module (TAF5, TAF6, TAF9, TAF10 and TAF12), and the Tra1 or SPT (Suppressor of Ty) module (TRA1, HFI1/ADA1, SPT3, SPT7, SPT8 and SPT20/ADA5). The Tra1/SPT module binds activators, the core module recruits TBP (TATA-binding protein), the HAT module contains the histone H3 acetyltransferase GCN5, and the DUB module comprises the histone H2B deubiquitinase UBP8. Also identified in an altered form of SAGA, named SALSA (SAGA altered, Spt8 absent) or SLIK (SAGA-like) complex, which contains a C-terminal truncated form of SPT7 and is missing SPT8. However, it has been shown that the SAGA and SAGA-like SALSA/SLIK transcriptional coactivators are structurally and biochemically equivalent. Component of the NuA4 acetyltransferase complex, which consists of the catalytic subunit ESA1 and the 12 non-catalytic subunits ACT1, ARP4, EAF1/VID21, SWC4/EAF2, EAF3, EAF5, EAF6, EAF7, EPL1, TRA1, YAF9 and YNG2. TRA1 is the scaffold subunit for binding to a variety of transcription activators or transcription factors to recruit NuA4 for targeted gene activation. Identified in the Ada.spt complex with NGG1/ADA3 and SPT7.

The protein resides in the nucleus. Its function is as follows. Essential scaffold subunit of the transcription coactivator SAGA complex. SAGA acts as a general cofactor required for essentially all RNA polymerase II transcription. At the promoters, SAGA is required for transcription pre-initiation complex (PIC) recruitment. It influences RNA polymerase II transcriptional activity through different activities such as TBP interaction (via core/TAF module) and promoter selectivity, interaction with transcription activators (via Tra1/SPT module), and chromatin modification through histone acetylation (via HAT module) and deubiquitination (via DUB module). SAGA preferentially acetylates histones H3 (to form H3K9ac, H3K14ac, H3K18ac and H3K23ac) and H2B and deubiquitinates histone H2B. SAGA interacts with DNA via upstream activating sequences (UASs). Also identified in a modified version of SAGA named SALSA or SLIK. The cleavage of SPT7 and the absence of the SPT8 subunit in SLIK neither drive any major conformational differences in its structure compared with SAGA, nor significantly affect HAT, DUB, or DNA-binding activities. Component of the NuA4 histone H4/H2A acetyltransferase involved in transcription and DNA repair. The protein is SAGA complex/NuA4 acetyltransferase complex subunit TRA1 of Saccharomyces cerevisiae (strain ATCC 204508 / S288c) (Baker's yeast).